We begin with the raw amino-acid sequence, 223 residues long: Ribosome assembly factor mrt4 (223 aa).

This sequence belongs to the universal ribosomal protein uL10 family. As to quaternary structure, associates with the pre-60S ribosomal particle.

It localises to the nucleus. It is found in the nucleolus. The protein resides in the cytoplasm. Its function is as follows. Component of the ribosome assembly machinery. Nuclear paralog of the ribosomal protein P0, it binds pre-60S subunits at an early stage of assembly in the nucleolus, and is replaced by P0 in cytoplasmic pre-60S subunits and mature 80S ribosomes. The sequence is that of Ribosome assembly factor mrt4 from Dictyostelium discoideum (Social amoeba).